We begin with the raw amino-acid sequence, 398 residues long: Cytochrome b (398 aa).

The helical transmembrane segment at leucine 45–methionine 65 threads the bilayer. Residues histidine 95 and histidine 109 each coordinate heme b. Transmembrane regions (helical) follow at residues valine 97–glycine 117, isoleucine 129–tryptophan 149, phenylalanine 164–valine 184, phenylalanine 192–leucine 212, phenylalanine 245–tyrosine 265, leucine 304–aspartate 324, proline 335–glycine 355, and isoleucine 364–leucine 384. Histidine 196 and histidine 210 together coordinate heme b.

It belongs to the cytochrome b family. As to quaternary structure, the main subunits of complex b-c1 are: cytochrome b, cytochrome c1 and the Rieske protein. It depends on heme b as a cofactor.

It localises to the cell membrane. Its function is as follows. Component of the ubiquinol-cytochrome c reductase complex (complex III or cytochrome b-c1 complex), which is a respiratory chain that generates an electrochemical potential coupled to ATP synthesis. The protein is Cytochrome b (petB) of Rickettsia typhi (strain ATCC VR-144 / Wilmington).